A 363-amino-acid polypeptide reads, in one-letter code: Carbamoyl phosphate synthase small chain (363 aa).

Residues 1–173 (MMKAFLVLDN…SKYIFGTHTG (173 aa)) form a CPSase region. L-glutamine-binding residues include S46, G225, and G227. The 187-residue stretch at 177–363 (KLAVYDYGVK…YDLVEKTKKG (187 aa)) folds into the Glutamine amidotransferase type-1 domain. C253 acts as the Nucleophile in catalysis. L254, Q257, N295, G297, and F298 together coordinate L-glutamine. Active-site residues include H336 and E338.

This sequence belongs to the CarA family. In terms of assembly, composed of two chains; the small (or glutamine) chain promotes the hydrolysis of glutamine to ammonia, which is used by the large (or ammonia) chain to synthesize carbamoyl phosphate. Tetramer of heterodimers (alpha,beta)4.

It carries out the reaction hydrogencarbonate + L-glutamine + 2 ATP + H2O = carbamoyl phosphate + L-glutamate + 2 ADP + phosphate + 2 H(+). The enzyme catalyses L-glutamine + H2O = L-glutamate + NH4(+). Its pathway is amino-acid biosynthesis; L-arginine biosynthesis; carbamoyl phosphate from bicarbonate: step 1/1. The protein operates within pyrimidine metabolism; UMP biosynthesis via de novo pathway; (S)-dihydroorotate from bicarbonate: step 1/3. Its function is as follows. Small subunit of the glutamine-dependent carbamoyl phosphate synthetase (CPSase). CPSase catalyzes the formation of carbamoyl phosphate from the ammonia moiety of glutamine, carbonate, and phosphate donated by ATP, constituting the first step of 2 biosynthetic pathways, one leading to arginine and/or urea and the other to pyrimidine nucleotides. The small subunit (glutamine amidotransferase) binds and cleaves glutamine to supply the large subunit with the substrate ammonia. The polypeptide is Carbamoyl phosphate synthase small chain (Leptospira interrogans serogroup Icterohaemorrhagiae serovar copenhageni (strain Fiocruz L1-130)).